The chain runs to 1058 residues: Isoleucine--tRNA ligase (1058 aa).

Residues 48 to 58 carry the 'HIGH' region motif; the sequence is PYTTGHIHLGT. The 'KMSKS' region signature appears at 596 to 600; it reads KMSKS. Lys599 serves as a coordination point for ATP.

This sequence belongs to the class-I aminoacyl-tRNA synthetase family. IleS type 2 subfamily. In terms of assembly, monomer. Requires Zn(2+) as cofactor.

The protein resides in the cytoplasm. The enzyme catalyses tRNA(Ile) + L-isoleucine + ATP = L-isoleucyl-tRNA(Ile) + AMP + diphosphate. Functionally, catalyzes the attachment of isoleucine to tRNA(Ile). As IleRS can inadvertently accommodate and process structurally similar amino acids such as valine, to avoid such errors it has two additional distinct tRNA(Ile)-dependent editing activities. One activity is designated as 'pretransfer' editing and involves the hydrolysis of activated Val-AMP. The other activity is designated 'posttransfer' editing and involves deacylation of mischarged Val-tRNA(Ile). The protein is Isoleucine--tRNA ligase of Methanosarcina barkeri (strain Fusaro / DSM 804).